Reading from the N-terminus, the 478-residue chain is Putative malate transporter YflS (478 aa).

The next 12 helical transmembrane spans lie at 12–31 (AVKL…IWFI), 41–57 (AWHL…GFIS), 64–81 (AIAI…TLSI), 96–118 (IVIA…ISYV), 187–209 (GFQG…PLIA), 222–244 (WTSW…PLVI), 277–296 (LSMV…GGSF), 300–319 (ATTT…VLTW), 332–354 (LTWF…VSWF), 364–386 (GFSW…YFFA), 398–420 (AFLA…LAFI), and 450–472 (WSIG…GLWW).

This sequence belongs to the SLC13A/DASS transporter (TC 2.A.47) family. DIT1 subfamily.

Its subcellular location is the cell membrane. Might be a malate transporter. This is Putative malate transporter YflS (yflS) from Bacillus subtilis (strain 168).